Reading from the N-terminus, the 62-residue chain is Large ribosomal subunit protein bL28 (62 aa).

This sequence belongs to the bacterial ribosomal protein bL28 family.

This is Large ribosomal subunit protein bL28 from Helicobacter pylori (strain P12).